Here is a 162-residue protein sequence, read N- to C-terminus: MGLSSLPGPSEGMLCVILVNTALSISIVKGIVRSFLGIVGISLSPSSSSPSSVTVSSENSSTSESFDFRVCQPESYLEEFRNRTPTLRFESLCRCKKQADNECSVCLSKFQGDSEINKLKCGHLFHKTCLEKWIDYWNITCPLCRTPLVVVPEDHQLSSNVW.

A helical transmembrane segment spans residues G12–V28. Residues C103–R145 form an RING-type; atypical zinc finger.

Interacts with UBC8 and TULP9. In terms of tissue distribution, ubiquitous. Higher expression in actively growing tissues.

The protein resides in the membrane. The catalysed reaction is S-ubiquitinyl-[E2 ubiquitin-conjugating enzyme]-L-cysteine + [acceptor protein]-L-lysine = [E2 ubiquitin-conjugating enzyme]-L-cysteine + N(6)-ubiquitinyl-[acceptor protein]-L-lysine.. The protein operates within protein modification; protein ubiquitination. In terms of biological role, function on abscisic acid homeostasis at post-translational level, probably through ubiquitin/proteasome-dependent substrate-specific degradation. The polypeptide is Probable E3 ubiquitin-protein ligase XERICO (XERICO) (Arabidopsis thaliana (Mouse-ear cress)).